The following is a 222-amino-acid chain: Large ribosomal subunit protein mL64 (222 aa).

Disordered stretches follow at residues 1–51, 136–170, and 182–222; these read MAAP…PRWQ, RRQQQARREKAQADKERRARLQAEAQERLGYHVDP, and LEKQ…TPDS. A compositionally biased stretch (basic and acidic residues) spans 141–170; the sequence is ARREKAQADKERRARLQAEAQERLGYHVDP. Positions 144–213 form a coiled coil; sequence EKAQADKERR…AAMAAAAAQD (70 aa). The short motif at 184-200 is the Nuclear localization signal element; the sequence is KQHRKRLKEEKQRKKKE. Over residues 203–212 the composition is skewed to low complexity; sequence AAAMAAAAAQ.

Belongs to the mitochondrion-specific ribosomal protein mL64 family. Component of the mitochondrial ribosome large subunit (39S) which comprises a 16S rRNA and about 50 distinct proteins. Interacts with GADD45A, GADD45B and GADD45G. Interacts with NR4A1 via the NR4A1 AB domain. Interacts with ATAD3A and ATAD3B.

The protein localises to the mitochondrion. It localises to the nucleus. In terms of biological role, acts as a negative regulator of G1 to S cell cycle phase progression by inhibiting cyclin-dependent kinases. Inhibitory effects are additive with GADD45 proteins but also occur in the absence of GADD45 proteins. Acts as a repressor of the orphan nuclear receptor NR4A1 by inhibiting AB domain-mediated transcriptional activity. May be involved in the hormone-mediated regulation of NR4A1 transcriptional activity. May play a role in mitochondrial protein synthesis. In Bos taurus (Bovine), this protein is Large ribosomal subunit protein mL64 (GADD45GIP1).